Here is an 880-residue protein sequence, read N- to C-terminus: Leucine-rich repeat-containing protein 66 (880 aa).

A helical transmembrane segment spans residues 4–24; that stretch reads LYFRVITIVIGLYFTGIMTNA. N-linked (GlcNAc...) asparagine glycosylation occurs at Asn45. LRR repeat units lie at residues 86–107, 110–130, 149–171, 172–193, 196–217, and 220–241; these read KIKHLDLSNNLISKITLSPFAY, ALEVLNLSNNAIHSLSLDLLS, LLKVLILQRNKLSDTPKGLWKLK, SLQSLDLSFNGILQIGWSDFHN, QLENLCLKSNKIFKIPPQAFKD, and KLQVIDLSNNALITILPMMIIA. N-linked (GlcNAc...) asparagine glycosylation is present at Asn115. The interval 319–368 is disordered; the sequence is SKAERPQGGRHTGISTLGKKAKAGSGLRKKQRRLPRSVRSTRDVQAAGKK. Residues 337–354 are compositionally biased toward basic residues; that stretch reads KKAKAGSGLRKKQRRLPR. The chain crosses the membrane as a helical span at residues 376–396; the sequence is ALAVCLSVFITFLVAFSLGAF. 2 disordered regions span residues 463–504 and 679–746; these read PHPH…NDGA and VTPA…SKDN. Residues 483 to 493 show a composition bias toward polar residues; the sequence is GSSQSPGQCGD. Positions 697–707 are enriched in acidic residues; that stretch reads CELESDCDSDE. Positions 709–720 are enriched in low complexity; sequence SLFTLSSISSES. Position 723 is a phosphoserine (Ser723). The span at 737-746 shows a compositional bias: polar residues; that stretch reads DESSGASKDN. The N-linked (GlcNAc...) asparagine glycan is linked to Asn746. At Ser752 the chain carries Phosphoserine. Asn756 is a glycosylation site (N-linked (GlcNAc...) asparagine). Disordered stretches follow at residues 764 to 816 and 855 to 880; these read GKCK…PLGD and TPPCSAEVPSDPDKAAFHERDSDILK. Composition is skewed to basic and acidic residues over residues 788–800 and 865–880; these read THLENASDTDRSE and DPDKAAFHERDSDILK.

It localises to the membrane. This Homo sapiens (Human) protein is Leucine-rich repeat-containing protein 66 (LRRC66).